Reading from the N-terminus, the 414-residue chain is Nuclear localization sequence-binding protein (414 aa).

Disordered stretches follow at residues 1-172, 244-264, and 336-414; these read MAKT…TIFV, STSKPAGNNDRAKKFGDTPSE, and RPVR…KTFD. Over residues 10 to 26 the composition is skewed to basic and acidic residues; it reads NKKEVKASKQAKEEKAK. Low complexity-rich tracts occupy residues 27-44 and 54-73; these read AVSSSSSESSSSSSSSSE and ESSSSSSSSDSESSSSSSSD. Residues 78–87 are compositionally biased toward basic and acidic residues; the sequence is AETKKEESKD. Phosphoserine is present on residues Ser-93, Ser-95, Ser-96, Ser-97, Ser-116, Ser-127, Ser-129, Ser-131, and Ser-143. Acidic residues predominate over residues 96–105; the sequence is SSDEEEEEEK. The span at 106 to 117 shows a compositional bias: basic and acidic residues; the sequence is EETKKEESKESS. Residues 118–128 show a composition bias toward low complexity; that stretch reads SSDSSSSSSSD. A compositionally biased stretch (basic and acidic residues) spans 134–144; that stretch reads EESNDKKRKSE. 2 RRM domains span residues 168-246 and 267-345; these read ATIF…MSTS and DTLF…FSSP. A compositionally biased stretch (gly residues) spans 351 to 386; that stretch reads GGRGGSRGFGGRGGGRGGNRGFGGRGGARGGRGGFR. Arg-353 is subject to Omega-N-methylarginine. An RGG-box region spans residues 353-384; the sequence is RGGSRGFGGRGGGRGGNRGFGGRGGARGGRGG. Asymmetric dimethylarginine; by HMT1; alternate is present on residues Arg-357, Arg-362, and Arg-366. Omega-N-methylarginine; by HMT1; alternate occurs at positions 357, 362, and 366. Residues 366–384 form an RNA-binding RGG-box region; it reads RGGNRGFGGRGGARGGRGG. Arg-370 is modified (omega-N-methylarginine). Asymmetric dimethylarginine; by HMT1; alternate occurs at positions 375, 379, and 382. Omega-N-methylarginine; by HMT1; alternate is present on residues Arg-375, Arg-379, and Arg-382. Arg-386 carries the post-translational modification Omega-N-methylarginine.

It belongs to the RRM GAR family. Methylated by HMT1, forming asymmetric dimethylarginines (DMA) within a domain referred to as an RGG box, made up of repeated Gly-Gly dipeptides interspersed with Arg and aromatic residues. Post-translationally, pyrophosphorylated by 5-diphosphoinositol pentakisphosphate (5-IP7). Serine pyrophosphorylation is achieved by Mg(2+)-dependent, but enzyme independent transfer of a beta-phosphate from a inositol pyrophosphate to a pre-phosphorylated serine residue.

It localises to the nucleus. The protein resides in the nucleolus. Involved in pre-rRNA processing. Specifically binds nuclear localization sequences. Candidate for a receptor at the nucleus that may be involved in both RNA and protein transport. Binds telomeric sequences of the type (TG[1-3])n in vitro. This chain is Nuclear localization sequence-binding protein, found in Saccharomyces cerevisiae (strain ATCC 204508 / S288c) (Baker's yeast).